Reading from the N-terminus, the 566-residue chain is Urease subunit alpha (566 aa).

In terms of domain architecture, Urease spans 128-566; the sequence is GGIDTHIHWI…LPMAQRYFLF (439 aa). Positions 133, 135, and 216 each coordinate Ni(2+). Lys-216 carries the post-translational modification N6-carboxylysine. His-218 contributes to the substrate binding site. His-245 and His-271 together coordinate Ni(2+). The active-site Proton donor is the His-319. Position 359 (Asp-359) interacts with Ni(2+).

This sequence belongs to the metallo-dependent hydrolases superfamily. Urease alpha subunit family. As to quaternary structure, heterotrimer of UreA (gamma), UreB (beta) and UreC (alpha) subunits. Three heterotrimers associate to form the active enzyme. Ni cation is required as a cofactor. Post-translationally, carboxylation allows a single lysine to coordinate two nickel ions.

The protein resides in the cytoplasm. It carries out the reaction urea + 2 H2O + H(+) = hydrogencarbonate + 2 NH4(+). The protein operates within nitrogen metabolism; urea degradation; CO(2) and NH(3) from urea (urease route): step 1/1. The protein is Urease subunit alpha of Acinetobacter baylyi (strain ATCC 33305 / BD413 / ADP1).